The following is a 594-amino-acid chain: Apolipoprotein N-acyltransferase (594 aa).

Positions 1–29 are enriched in acidic residues; it reads MIPAVTDDDPLEDPLDDDVAPGLDDAEPE. Residues 1 to 48 form a disordered region; sequence MIPAVTDDDPLEDPLDDDVAPGLDDAEPEPEPRDEHDEPSRPATGSRI. Residues 1 to 67 lie on the Cytoplasmic side of the membrane; that stretch reads MIPAVTDDDP…RFGKGVLDRC (67 aa). Over residues 30–40 the composition is skewed to basic and acidic residues; sequence PEPRDEHDEPS. The helical transmembrane segment at 68-87 threads the bilayer; the sequence is APLSAAIGGGLALWLSFPPI. Residues 88–116 are Extracellular-facing; that stretch reads GWWFTAFPGLALLGWVLTRTATTKAGGFG. A helical transmembrane segment spans residues 117 to 134; sequence YGVLFGLAFYVPLLPWIS. Residues 135-138 are Cytoplasmic-facing; that stretch reads GLVG. Residues 139 to 160 traverse the membrane as a helical segment; it reads AVPWLALAFAESLFCGLFGLGA. The Extracellular portion of the chain corresponds to 161–221; sequence VVVVRLPGWP…IGGAPLVSFA (61 aa). Residues 222 to 239 traverse the membrane as a helical segment; sequence VALIGFSLTLLTAQIVWW. The Cytoplasmic segment spans residues 240–251; the sequence is WRHGHKPGVPAP. A helical transmembrane segment spans residues 252–269; the sequence is AVMLPGVAIAASLLVTAL. Over 270–554 the chain is Extracellular; the sequence is VWPQVRQSGT…TDLTPATKWG (285 aa). The 257-residue stretch at 287-543 folds into the CN hydrolase domain; it reads VTVAAVQGNV…PAYLDNQIRL (257 aa). The active-site Proton acceptor is the Glu340. Residue Lys405 is part of the active site. Catalysis depends on Cys455, which acts as the Nucleophile. A helical transmembrane segment spans residues 555 to 572; that stretch reads PIVQAVLVIAGVAVLLIA. The Cytoplasmic portion of the chain corresponds to 573 to 594; the sequence is ILHNGRFAPRMLRRRSATTVKR.

This sequence belongs to the CN hydrolase family. Apolipoprotein N-acyltransferase subfamily. As to quaternary structure, interacts with Ppm1 (AC A0QZ12) upon coexpression in E.coli, which increases the PPM synthase activity of Ppm1.

It localises to the cell membrane. It carries out the reaction N-terminal S-1,2-diacyl-sn-glyceryl-L-cysteinyl-[lipoprotein] + a glycerophospholipid = N-acyl-S-1,2-diacyl-sn-glyceryl-L-cysteinyl-[lipoprotein] + a 2-acyl-sn-glycero-3-phospholipid + H(+). The protein operates within protein modification; lipoprotein biosynthesis (N-acyl transfer). In terms of biological role, catalyzes the phospholipid dependent N-acylation of the N-terminal cysteine of apolipoprotein, the last step in lipoprotein maturation. Can transfer a number of fatty acids (C16 and C19, palmitic and probably tuberculostearic acids respectively are shown). Enhances the polyprenol monophosphomannose (PPM) synthase activity of Ppm1 (AC A0QZ12) without itself having PPM synthase catalytic activity. In Mycolicibacterium smegmatis (strain ATCC 700084 / mc(2)155) (Mycobacterium smegmatis), this protein is Apolipoprotein N-acyltransferase.